The following is a 403-amino-acid chain: Ribosomal RNA large subunit methyltransferase I (403 aa).

Residues 9–86 (YPRLVLSKGR…KAESIDIAFF (78 aa)) form the PUA domain.

The protein belongs to the methyltransferase superfamily. RlmI family.

The protein resides in the cytoplasm. The enzyme catalyses cytidine(1962) in 23S rRNA + S-adenosyl-L-methionine = 5-methylcytidine(1962) in 23S rRNA + S-adenosyl-L-homocysteine + H(+). Its function is as follows. Specifically methylates the cytosine at position 1962 (m5C1962) of 23S rRNA. The polypeptide is Ribosomal RNA large subunit methyltransferase I (Salmonella gallinarum (strain 287/91 / NCTC 13346)).